The primary structure comprises 4249 residues: Fibrocystin-L (4249 aa).

The N-terminal stretch at 1 to 20 (MGHLWLSGTWFLFGLLWCAA) is a signal peptide. Residues 21–4222 (DSHKGSSETI…TPVQTLAVIT (4202 aa)) lie on the Extracellular side of the membrane. IPT/TIG domains are found at residues 31–132 (PKVT…GVAS), 146–255 (PTIR…KMTY), 270–361 (PEVV…ILEY), 1067–1153 (PLIL…HFIY), 1155–1234 (SQIS…SFSY), 1240–1323 (PVVT…KLNA), 1329–1468 (LEVI…SFSY), 1565–1648 (PSII…TLTK), 1658–1742 (PNID…SFSY), 1748–1827 (PYVT…NLTI), 1830–1909 (PAVA…SFTY), 1915–1996 (PFLK…AFEY), 1998–2084 (LSIQ…LFTY), and 2090–2175 (PLIT…DFLY). Residues 337-492 (PGGRGLKVEV…NVFTEQQTGD (156 aa)) enclose the PA14 domain. Thr1297 and Thr1359 each carry an O-linked (GalNAc...) threonine glycan. O-linked (GalNAc...) threonine glycosylation is present at Thr1838. The region spanning 2183–2303 (SSWGGSPPPE…IPVVWTRLTH (121 aa)) is the G8 1 domain. 5 PbH1 repeats span residues 2484-2506 (QFKS…TIHN), 2507-2529 (THHL…FIED), 2565-2587 (NPNN…WYRM), 2664-2686 (GGAL…ETKR), and 2732-2755 (SQGL…ALGV). Residues 3035-3173 (SFWQSSPENN…HSVYKTKLLE (139 aa)) enclose the G8 2 domain. PbH1 repeat units follow at residues 3292 to 3314 (KGNA…RDST), 3354 to 3376 (TDGV…RIWG), 3415 to 3437 (GTNT…RIDG), 3470 to 3492 (PGCS…YFQT), and 3493 to 3514 (TESV…FSMV). O-linked (GalNAc...) threonine glycosylation is present at Thr3735. Residues 4183–4208 (LSAQSVPGGSGSSPGSGSSSSGHSKA) form a disordered region. Residues 4197–4208 (GSGSSSSGHSKA) show a composition bias toward low complexity. A helical transmembrane segment spans residues 4223-4243 (ACLVGRLLLLEVFMAAVFILN). Residues 4244–4249 (TTVGIN) lie on the Cytoplasmic side of the membrane.

As to expression, expressed in neurons in the hippocampus and the cerebral cortex (at protein level). Transiently expressed at high levels in inner ear hair cells, predominantly in outer hair cells, during early postnatal development (at protein level).

The protein resides in the membrane. Its subcellular location is the cell projection. It localises to the stereocilium membrane. Functionally, component of hair-cell stereocilia coat. Required for normal hearing. This Mus musculus (Mouse) protein is Fibrocystin-L (Pkhd1l1).